Here is a 272-residue protein sequence, read N- to C-terminus: Ingression protein fic1 (272 aa).

The C2 domain occupies Met-1 to Tyr-107. The segment at Val-155–Ser-187 is disordered. Residues Lys-158–Pro-170 are compositionally biased toward basic residues.

The protein belongs to the INN1/fic1 family. In terms of assembly, interacts with cdc15 and imp2.

The protein resides in the cytoplasm. It localises to the nucleus. Functionally, involved in the ingression of the plasma membrane during cytokinesis, leading to the separation of the daughter cells. Unlike its S.cerevisiae ortholog INN1, it does not play an essential role, probably because the actinomyosin ring is connected to the cell cortex by many more proteins. In Schizosaccharomyces pombe (strain 972 / ATCC 24843) (Fission yeast), this protein is Ingression protein fic1 (fic1).